The primary structure comprises 393 residues: MITLITEQLQKQTLDELKCTRFSVSLPLPDHADIPNCGDPFQLVSEGASWRGLPHCSCAEFQDSLNFSYHPSGLSLHLRPPSRGNSPKEPPLSQVLSPEPPDPEKLPVPPAPPSKRHCRSLSVPVDLSRWQPVWRPAPSKLWTPIKHRGNAGGGGPQVPQQSPPKRVSSLRFLQAPSASSQCAPAHRPYSPPFFSLALAQDSAQPCATSPQSGSWESDAESLSPCPPQRRFSLSPSLGPQASRFLPSARSSPASSPELPWRPRGLRNLPRSRSQPCDLDARKTGVKRRHEEDCRRLRPSLDFDKMNQKPYSGGLCLQETAREEGSNVSPPWFMACSPPPLSASCSPVEGSSQVLSESEEEEEGSVRWERQALSKRTLCQQDFGDLDLNLIEEN.

Met-1 bears the N-acetylmethionine mark. Residues His-77–Ser-120 form a disordered region. A phosphoserine mark is found at Ser-122 and Ser-162. Disordered stretches follow at residues Leu-141 to Val-167 and Gln-204 to Thr-283. Residues Gln-204–Trp-215 show a composition bias toward polar residues. Residues Ser-232, Ser-234, Ser-255, Ser-273, and Ser-299 each carry the phosphoserine modification. Residues Ala-241–Pro-256 show a composition bias toward low complexity. The segment covering Ser-343 to Ser-355 has biased composition (low complexity). The interval Ser-343 to Val-365 is disordered.

This sequence belongs to the FAM53 family.

The protein is Protein FAM53C of Mus musculus (Mouse).